The following is a 205-amino-acid chain: Auxin-responsive protein IAA8 (205 aa).

The tract at residues 1-48 (MECMASTEESLPASSSMDSCSGELPTTTTTAPAQSTASSGCRPPATAA) is disordered. Over residues 7–19 (TEESLPASSSMDS) the composition is skewed to polar residues. A compositionally biased stretch (low complexity) spans 25–39 (PTTTTTAPAQSTASS). The short motif at 58 to 62 (LRLGL) is the EAR-like (transcriptional repression) element. Residues 71 to 98 (DGNNPSTPRSSLTTATVTADRGGGGGGH) form a disordered region. Residues 73–87 (NNPSTPRSSLTTATV) are compositionally biased toward polar residues. Residues 103-199 (SLFVKVYMEG…KRLRIARADD (97 aa)) form the PB1 domain.

The protein belongs to the Aux/IAA family. Homodimers and heterodimers. Highly expressed in green shoots. Expressed in flowers.

It is found in the nucleus. In terms of biological role, aux/IAA proteins are short-lived transcriptional factors that function as repressors of early auxin response genes at low auxin concentrations. This is Auxin-responsive protein IAA8 (IAA8) from Oryza sativa subsp. japonica (Rice).